The following is a 26-amino-acid chain: MKFYTIKLPKFLGGIVRAMLGSFRKD.

The tract at residues 3–9 is important for localization; it reads FYTIKLP.

Interacts with SpoIVA. May interact with the ATP-dependent protease FtsH.

It is found in the forespore outer membrane. Functionally, coordinates cortex and coat assembly during sporulation. Associates with the spore coat protein SpoIVA and with the outer forespore membrane, thereby serving as a membrane anchor that tethers SpoIVA and the entire spore coat to the forespore surface. May also serve as a competitive inhibitor of FtsH activity during sporulation. The polypeptide is Stage V sporulation protein M (Bacillus subtilis (strain 168)).